An 818-amino-acid chain; its full sequence is Nibrin (818 aa).

Residues 22 to 70 form the FHA domain; sequence YVVGRKNCEILLTNDQSISRVHAVLTVTEQAVTLKDSSKYGTFVNGEKL. 2 BRCT domains span residues 91–168 and 211–301; these read SKFS…SALS and GKTF…LAAI. 3 disordered regions span residues 372 to 716, 729 to 757, and 793 to 818; these read AVGE…DLPR, NNSS…KKNV, and EEKL…AKKR. Over residues 379–405 the composition is skewed to polar residues; that stretch reads KTNPTQKASTTNKPLSLGQEPSSTRIV. Residues 409-419 are compositionally biased toward low complexity; it reads VMSSESFSVVE. Polar residues predominate over residues 444-469; sequence APSSGNTTLKHSPQKQTALTSFFQPS. Positions 470-475 match the Nuclear localization signal motif; sequence SKKRPR. Residues 515–530 show a composition bias toward polar residues; sequence EETSLGQACGTGQNSS. A compositionally biased stretch (acidic residues) spans 549 to 571; the sequence is TAADDLEMSLEELEFLMSDEMDE. Polar residues predominate over residues 586–602; sequence GLTSKINSEQLSNQQEV. The span at 603 to 612 shows a compositional bias: basic and acidic residues; the sequence is TESKGRKGEK. The segment covering 613–625 has biased composition (low complexity); sequence NQQSSSSNIQSMQ. Polar residues-rich tracts occupy residues 633-644 and 653-662; these read VTNQDTQTQSKR and SSANKGPSKN. The segment covering 663-675 has biased composition (basic and acidic residues); sequence KTPELEEVKKEEV. 2 stretches are compositionally biased toward polar residues: residues 678–692 and 699–708; these read VVNS…QTSE and MQASTSNSGP. Basic and acidic residues predominate over residues 793–808; that stretch reads EEKLNEREETLGDDLF. A FxF/Y motif motif is present at residues 804 to 813; the sequence is GDDLFRYNPR.

This sequence belongs to the Nibrin family. Component of the MRN complex composed of two heterodimers rad50 and mre11 associated with a single nbn.

It localises to the nucleus. It is found in the chromosome. The protein localises to the PML body. The protein resides in the telomere. Component of the MRN complex, which plays a central role in double-strand break (DSB) repair, DNA recombination, maintenance of telomere integrity and meiosis. The MRN complex is involved in the repair of DNA double-strand breaks (DSBs) via homologous recombination (HR), an error-free mechanism which primarily occurs during S and G2 phases. The complex (1) mediates the end resection of damaged DNA, which generates proper single-stranded DNA, a key initial steps in HR, and is (2) required for the recruitment of other repair factors and efficient activation of ATM and ATR upon DNA damage. The MRN complex possesses single-strand endonuclease activity and double-strand-specific 3'-5' exonuclease activity, which are provided by MRE11, to initiate end resection, which is required for single-strand invasion and recombination. Within the MRN complex, nbn acts as a protein-protein adapter, which specifically recognizes and binds phosphorylated proteins, promoting their recruitment to DNA damage sites. Recruits mre11 and rad50 components of the MRN complex to DSBs in response to DNA damage. Promotes the recruitment of PI3/PI4-kinase family members atm, atr, and probably DNA-PKcs to the DNA damage sites, activating their functions. Mediates the recruitment of phosphorylated rbbp8/CtIP to DSBs, leading to cooperation between the MRN complex and rbbp8/CtIP to initiate end resection. The MRN complex and rbbp8/CtIP are also required for chromosome alignment during metaphase. The sequence is that of Nibrin (nbn) from Danio rerio (Zebrafish).